Consider the following 245-residue polypeptide: NLP effector protein Pc118551 (245 aa).

The signal sequence occupies residues 1 to 19; the sequence is MNLRAFLLSAVAALVAVQA. A Hepta-peptide GHRHDWE motif motif is present at residues 121 to 127; it reads QRRHLWE. N140 is a glycosylation site (N-linked (GlcNAc...) asparagine).

It belongs to the Necrosis inducing protein (NPP1) family.

The protein localises to the secreted. Secreted effector that contributes strongly to virulence during infection by P.capsici. The sequence is that of NLP effector protein Pc118551 from Phytophthora capsici.